Here is a 285-residue protein sequence, read N- to C-terminus: ATP synthase gamma chain (285 aa).

It belongs to the ATPase gamma chain family. In terms of assembly, F-type ATPases have 2 components, CF(1) - the catalytic core - and CF(0) - the membrane proton channel. CF(1) has five subunits: alpha(3), beta(3), gamma(1), delta(1), epsilon(1). CF(0) has three main subunits: a, b and c.

It is found in the cell membrane. Its function is as follows. Produces ATP from ADP in the presence of a proton gradient across the membrane. The gamma chain is believed to be important in regulating ATPase activity and the flow of protons through the CF(0) complex. This chain is ATP synthase gamma chain, found in Dehalococcoides mccartyi (strain CBDB1).